A 34-amino-acid polypeptide reads, in one-letter code: Potassium channel toxin alpha-KTx 6.2 (34 aa).

Intrachain disulfides connect Cys3/Cys24, Cys9/Cys29, Cys13/Cys19, and Cys31/Cys34. Cys34 bears the Cysteine amide mark.

The protein belongs to the short scorpion toxin superfamily. Potassium channel inhibitor family. Alpha-KTx 06 subfamily. As to expression, expressed by the venom gland.

It localises to the secreted. Its function is as follows. Blocks voltage-gated potassium channels Kv1.2/KCNA2 (IC(50)=0.12-0.8 nM), KCa3.1/KCNN4 (IC(50)=1-2.2 nM), Shaker B (IC(50)=2.39-80 nM), Kv1.1/KCNA1 (IC(50)=37-45 or no activity, depending on the study), Kv1.3/KCNA3 (IC(50)=150-180 or no activity, depending on the study). In Scorpio palmatus (Israeli golden scorpion), this protein is Potassium channel toxin alpha-KTx 6.2.